The sequence spans 289 residues: Bidirectional sugar transporter SWEET11 (289 aa).

Topologically, residues 1–9 are extracellular; it reads MSLFNTENT. Residues 10–30 traverse the membrane as a helical segment; that stretch reads WAFVFGLLGNLISFAVFLSPV. The region spanning 12–98 is the MtN3/slv 1 domain; sequence FVFGLLGNLI…SMFLAYAPKP (87 aa). Over 31 to 43 the chain is Cytoplasmic; that stretch reads PTFYRIWKKKTTE. Residues 44-64 traverse the membrane as a helical segment; it reads GFQSIPYVVALFSATLWLYYA. Residues 65–70 lie on the Extracellular side of the membrane; sequence TQKKDV. The chain crosses the membrane as a helical span at residues 71-91; it reads FLLVTINAFGCFIETIYISMF. Residues 92 to 105 are Cytoplasmic-facing; sequence LAYAPKPARMLTVK. The chain crosses the membrane as a helical span at residues 106–126; it reads MLLLMNFGGFCAILLLCQFLV. Residues 127-133 are Extracellular-facing; the sequence is KGATRAK. The chain crosses the membrane as a helical span at residues 134–154; that stretch reads IIGGICVGFSVCVFAAPLSII. The MtN3/slv 2 domain occupies 134-218; the sequence is IIGGICVGFS…ILYVVYKYCK (85 aa). At 155-167 the chain is on the cytoplasmic side; it reads RTVIKTRSVEYMP. Residues 168-188 form a helical membrane-spanning segment; sequence FSLSLTLTISAVIWLLYGLAL. The Extracellular portion of the chain corresponds to 189 to 192; it reads KDIY. Residues 193–213 form a helical membrane-spanning segment; the sequence is VAFPNVLGFALGALQMILYVV. The Cytoplasmic portion of the chain corresponds to 214 to 289; that stretch reads YKYCKTSPHL…GKQSSSAAAT (76 aa). A disordered region spans residues 266–289; the sequence is DRRAEIEDGQTPKHGKQSSSAAAT. The residue at position 276 (T276) is a Phosphothreonine.

It belongs to the SWEET sugar transporter family. As to quaternary structure, forms homooligomers and heterooligomers with SWEET1, SWEET3, SWEET5, SWEET6, SWEET7, SWEET8, SWEET9, SWEET12, SWEET13, SWEET15 and SWEET17. Expressed in leaves, especially in phloem. Expressed in developing seeds.

It is found in the cell membrane. In terms of biological role, mediates both low-affinity uptake and efflux of sugar across the plasma membrane. Involved in phloem loading by mediating export from parenchyma cells feeding H(+)-coupled import into the sieve element/companion cell complex, thus contributing to the sucrose migration from sites of synthesis in the mesophyll to the phloem. Contributes to seed filling by triggering sucrose efflux involved in the transfer of sugars from seed coat to embryos. The chain is Bidirectional sugar transporter SWEET11 from Arabidopsis thaliana (Mouse-ear cress).